A 301-amino-acid chain; its full sequence is Nucleotide-binding protein Noca_2527 (301 aa).

26 to 33 (GMTGAGRS) serves as a coordination point for ATP. 77–80 (DVRS) is a GTP binding site.

This sequence belongs to the RapZ-like family.

Displays ATPase and GTPase activities. The chain is Nucleotide-binding protein Noca_2527 from Nocardioides sp. (strain ATCC BAA-499 / JS614).